The sequence spans 367 residues: Phosphoribosylformylglycinamidine cyclo-ligase (367 aa).

The protein belongs to the AIR synthase family.

Its subcellular location is the cytoplasm. It carries out the reaction 2-formamido-N(1)-(5-O-phospho-beta-D-ribosyl)acetamidine + ATP = 5-amino-1-(5-phospho-beta-D-ribosyl)imidazole + ADP + phosphate + H(+). It participates in purine metabolism; IMP biosynthesis via de novo pathway; 5-amino-1-(5-phospho-D-ribosyl)imidazole from N(2)-formyl-N(1)-(5-phospho-D-ribosyl)glycinamide: step 2/2. The protein is Phosphoribosylformylglycinamidine cyclo-ligase of Cyanothece sp. (strain PCC 7425 / ATCC 29141).